Consider the following 357-residue polypeptide: uncharacterized protein (357 aa).

A DNA-binding region (zn(2)-C6 fungal-type) is located at residues 6-32 (CIVCRQKKIKCDRKNPCTNCEQAGEKC).

It localises to the nucleus. This is an uncharacterized protein from Schizosaccharomyces pombe (strain 972 / ATCC 24843) (Fission yeast).